The chain runs to 1075 residues: mRNA 3'-end-processing protein rna14 (1075 aa).

Disordered regions lie at residues 20–185 (SMGY…NSSL) and 215–237 (IARE…GRLP). Composition is skewed to polar residues over residues 54–72 (ENLQ…QPQP) and 93–112 (PESQ…QPKT). Over residues 120 to 133 (VEDEDEDDAGDADY) the composition is skewed to acidic residues. 6 HAT repeats span residues 270–302 (NRID…MESE), 304–335 (NELF…YVRR), 346–381 (QARK…FIRS), 395–428 (QKMD…FEMG), 465–498 (TTLP…WEKG), and 510–542 (AYKG…FCFL). Disordered regions lie at residues 621-653 (EETF…SVKN) and 840-941 (PTTF…QGSP). A compositionally biased stretch (polar residues) spans 868–883 (GTPSSRFPEASVTNSP). Over residues 885–896 (RPLEDFDDDMSR) the composition is skewed to basic and acidic residues. The span at 925–940 (ALQVPSSGSQYRSQGS) shows a compositional bias: polar residues.

It is found in the nucleus. The protein resides in the cytoplasm. Component of the cleavage factor IA (CFIA) complex, which is involved in the endonucleolytic cleavage during polyadenylation-dependent pre-mRNA 3'-end formation. The sequence is that of mRNA 3'-end-processing protein rna14 (rna14) from Emericella nidulans (strain FGSC A4 / ATCC 38163 / CBS 112.46 / NRRL 194 / M139) (Aspergillus nidulans).